A 318-amino-acid chain; its full sequence is L-lactate dehydrogenase (318 aa).

Residues Val18, Asp39, Lys44, Tyr69, and 83–84 (GA) each bind NAD(+). Substrate contacts are provided by Gln86 and Arg92. NAD(+) contacts are provided by residues Ser105, 122 to 124 (VSN), and Ser147. 124–127 (NPVD) serves as a coordination point for substrate. A substrate-binding site is contributed by 152 to 155 (DTSR). The active-site Proton acceptor is the His179. Tyr225 carries the phosphotyrosine modification. Residue Thr234 coordinates substrate.

This sequence belongs to the LDH/MDH superfamily. LDH family. As to quaternary structure, homotetramer.

The protein resides in the cytoplasm. It catalyses the reaction (S)-lactate + NAD(+) = pyruvate + NADH + H(+). Its pathway is fermentation; pyruvate fermentation to lactate; (S)-lactate from pyruvate: step 1/1. In terms of biological role, catalyzes the conversion of lactate to pyruvate. This Clostridium botulinum (strain Kyoto / Type A2) protein is L-lactate dehydrogenase.